A 272-amino-acid chain; its full sequence is tRNA pseudouridine synthase B (272 aa).

The active-site Nucleophile is the aspartate 38.

The protein belongs to the pseudouridine synthase TruB family. Type 1 subfamily.

It catalyses the reaction uridine(55) in tRNA = pseudouridine(55) in tRNA. Functionally, responsible for synthesis of pseudouridine from uracil-55 in the psi GC loop of transfer RNAs. In Campylobacter jejuni subsp. jejuni serotype O:2 (strain ATCC 700819 / NCTC 11168), this protein is tRNA pseudouridine synthase B.